Here is a 186-residue protein sequence, read N- to C-terminus: Ribosome-recycling factor (186 aa).

Belongs to the RRF family.

The protein localises to the cytoplasm. Its function is as follows. Responsible for the release of ribosomes from messenger RNA at the termination of protein biosynthesis. May increase the efficiency of translation by recycling ribosomes from one round of translation to another. In Pediococcus pentosaceus (strain ATCC 25745 / CCUG 21536 / LMG 10740 / 183-1w), this protein is Ribosome-recycling factor.